Here is a 65-residue protein sequence, read N- to C-terminus: Probable tautomerase RSp1151 (65 aa).

Proline 2 functions as the Proton acceptor; via imino nitrogen in the catalytic mechanism.

The protein belongs to the 4-oxalocrotonate tautomerase family.

The chain is Probable tautomerase RSp1151 from Ralstonia nicotianae (strain ATCC BAA-1114 / GMI1000) (Ralstonia solanacearum).